A 385-amino-acid chain; its full sequence is Na(+)/H(+) antiporter NhaA (385 aa).

The next 11 helical transmembrane spans lie at 9-29 (YSAI…NVLD), 45-65 (IFGL…VFFF), 87-107 (IIPG…YLSV), 114-134 (GWPV…AIFG), 155-175 (AGIV…WIIV), 198-218 (TFLI…SVYQ), 220-235 (GIHA…IMLN), 245-265 (ALEP…AAMV), 282-302 (ILLG…IIAL), 312-332 (FFNL…SLLM), and 345-365 (QGVI…IILM).

The protein belongs to the NhaA Na(+)/H(+) (TC 2.A.33) antiporter family.

It is found in the cell membrane. The enzyme catalyses Na(+)(in) + 2 H(+)(out) = Na(+)(out) + 2 H(+)(in). In terms of biological role, na(+)/H(+) antiporter that extrudes sodium in exchange for external protons. The protein is Na(+)/H(+) antiporter NhaA of Tropheryma whipplei (strain TW08/27) (Whipple's bacillus).